A 166-amino-acid polypeptide reads, in one-letter code: Phospholipase A2 inhibitor clone 02/03/06/07 (166 aa).

An N-terminal signal peptide occupies residues 1–19; that stretch reads MRLILLSGLLLLGTFLANG. A C-type lectin domain is found at 46 to 161; the sequence is LKHAFLTVHK…CDDNLLVVCE (116 aa). Disulfide bonds link Cys83/Cys160 and Cys138/Cys152. A glycan (N-linked (GlcNAc...) asparagine) is linked at Asn122.

The protein belongs to the alpha-type phospholipase A2 inhibitor family. Homotrimer; non-covalently linked. Expressed by the liver.

The protein localises to the secreted. Functionally, this phospholipase A2 inhibitor binds directly phospholipase A2 in the presence or absence of calcium. The chain is Phospholipase A2 inhibitor clone 02/03/06/07 from Lachesis muta muta (Bushmaster).